Here is a 228-residue protein sequence, read N- to C-terminus: Carbonic anhydrase (228 aa).

Zn(2+)-binding residues include Cys-56, Asp-58, His-112, and Cys-115.

Belongs to the beta-class carbonic anhydrase family. It depends on Zn(2+) as a cofactor.

It catalyses the reaction hydrogencarbonate + H(+) = CO2 + H2O. Catalyzes the reversible hydration of CO(2) to H(2)CO(3). The main role may be to provide inorganic carbon for the bicarbonate-dependent carboxylation reactions catalyzed by pyruvate carboxylase, acetyl-CoA carboxylase and carbamoyl-phosphate synthetase. Involved in osmoadaptation. The sequence is that of Carbonic anhydrase from Emericella nidulans (strain FGSC A4 / ATCC 38163 / CBS 112.46 / NRRL 194 / M139) (Aspergillus nidulans).